Reading from the N-terminus, the 276-residue chain is Monoglyceride lipase homolog (276 aa).

It belongs to the orthopoxvirus OPG043 family.

This is Monoglyceride lipase homolog (OPG043) from Cynomys gunnisoni (Gunnison's prairie dog).